Here is a 619-residue protein sequence, read N- to C-terminus: Chaperone protein HscA homolog (619 aa).

Belongs to the heat shock protein 70 family.

In terms of biological role, chaperone involved in the maturation of iron-sulfur cluster-containing proteins. Has a low intrinsic ATPase activity which is markedly stimulated by HscB. The polypeptide is Chaperone protein HscA homolog (Chromobacterium violaceum (strain ATCC 12472 / DSM 30191 / JCM 1249 / CCUG 213 / NBRC 12614 / NCIMB 9131 / NCTC 9757 / MK)).